The primary structure comprises 499 residues: Histidine ammonia-lyase (499 aa).

A cross-link (5-imidazolinone (Ala-Gly)) is located at residues 142-144 (ASG). Ser143 carries the 2,3-didehydroalanine (Ser) modification.

Belongs to the PAL/histidase family. Post-translationally, contains an active site 4-methylidene-imidazol-5-one (MIO), which is formed autocatalytically by cyclization and dehydration of residues Ala-Ser-Gly.

It localises to the cytoplasm. The enzyme catalyses L-histidine = trans-urocanate + NH4(+). It participates in amino-acid degradation; L-histidine degradation into L-glutamate; N-formimidoyl-L-glutamate from L-histidine: step 1/3. The polypeptide is Histidine ammonia-lyase (Staphylococcus saprophyticus subsp. saprophyticus (strain ATCC 15305 / DSM 20229 / NCIMB 8711 / NCTC 7292 / S-41)).